Consider the following 199-residue polypeptide: Inosine triphosphate pyrophosphatase (199 aa).

Residue 12–17 (TGNAKK) participates in ITP binding. Residue Glu-42 participates in Mg(2+) binding. ITP contacts are provided by residues Lys-54, 70 to 71 (DT), Lys-87, 146 to 149 (FGWD), Lys-169, and 174 to 175 (HR).

Belongs to the HAM1 NTPase family. Homodimer. Mg(2+) is required as a cofactor. Mn(2+) serves as cofactor.

The protein localises to the cytoplasm. The catalysed reaction is ITP + H2O = IMP + diphosphate + H(+). It catalyses the reaction dITP + H2O = dIMP + diphosphate + H(+). The enzyme catalyses XTP + H2O = XMP + diphosphate + H(+). In terms of biological role, pyrophosphatase that hydrolyzes non-canonical purine nucleotides such as inosine triphosphate (ITP), deoxyinosine triphosphate (dITP) or xanthosine 5'-triphosphate (XTP) to their respective monophosphate derivatives. The enzyme does not distinguish between the deoxy- and ribose forms. Probably excludes non-canonical purines from RNA and DNA precursor pools, thus preventing their incorporation into RNA and DNA and avoiding chromosomal lesions. This Monosiga brevicollis (Choanoflagellate) protein is Inosine triphosphate pyrophosphatase.